The sequence spans 68 residues: Disintegrin EMF10B (68 aa).

In terms of domain architecture, Disintegrin spans 1–68 (ELLQNSGNPC…SDCPRNPVFK (68 aa)). 4 disulfides stabilise this stretch: Cys10–Cys33, Cys24–Cys30, Cys29–Cys54, and Cys42–Cys61. Residues 46–48 (MGD) carry the Cell attachment site; atypical (MGD) motif.

The protein belongs to the venom metalloproteinase (M12B) family. P-II subfamily. P-IIe sub-subfamily. In terms of assembly, heterodimer with EMF10A; disulfide-linked. In terms of tissue distribution, expressed by the venom gland.

The protein localises to the secreted. Functionally, extremely potent and selective inhibitor of integrin alpha-5/beta-1 (ITGA5/ITGB1). Partially inhibits adhesion of cells expressing alpha-IIb/beta-3 (ITGA2B/ITGB3), alpha-V/beta-3 (ITGAV/ITGB3), and alpha-4/beta-1 (ITGA4/ITGB1) to appropriate ligands only at concentration higher than 500 nM. Weakly inhibits ADP-induced platelet aggregation. This chain is Disintegrin EMF10B, found in Eristicophis macmahoni (Leaf-nosed viper).